The primary structure comprises 453 residues: Kynureninase (453 aa).

Residues L114, T115, 142–145 (FPSD), D232, H235, and Y257 each bind pyridoxal 5'-phosphate. The residue at position 258 (K258) is an N6-(pyridoxal phosphate)lysine. Pyridoxal 5'-phosphate is bound at residue W286.

This sequence belongs to the kynureninase family. Homodimer. Requires pyridoxal 5'-phosphate as cofactor.

It is found in the cytoplasm. It carries out the reaction L-kynurenine + H2O = anthranilate + L-alanine + H(+). The enzyme catalyses 3-hydroxy-L-kynurenine + H2O = 3-hydroxyanthranilate + L-alanine + H(+). It participates in amino-acid degradation; L-kynurenine degradation; L-alanine and anthranilate from L-kynurenine: step 1/1. It functions in the pathway cofactor biosynthesis; NAD(+) biosynthesis; quinolinate from L-kynurenine: step 2/3. Its function is as follows. Catalyzes the cleavage of L-kynurenine (L-Kyn) and L-3-hydroxykynurenine (L-3OHKyn) into anthranilic acid (AA) and 3-hydroxyanthranilic acid (3-OHAA), respectively. This chain is Kynureninase, found in Cryptococcus neoformans var. neoformans serotype D (strain B-3501A) (Filobasidiella neoformans).